The sequence spans 360 residues: Photosystem II protein D1 (360 aa).

A run of 3 helical transmembrane segments spans residues 29–46 (YIGW…TATT), 118–133 (HFLL…EWEF), and 142–156 (WISV…AASA). H118 contributes to the chlorophyll a binding site. Residue W126 participates in pheophytin a binding. Residues D170 and E189 each coordinate [CaMn4O5] cluster. The chain crosses the membrane as a helical span at residues 197–218 (FHQLGVAGVFGGSLFSAMHGSL). H198 contacts chlorophyll a. A quinone is bound by residues H215 and 264–265 (SF). Residue H215 participates in Fe cation binding. H272 is a Fe cation binding site. A helical transmembrane segment spans residues 274-288 (FLGLWPVVGIWFTAL). Positions 332, 333, 342, and 344 each coordinate [CaMn4O5] cluster. A propeptide spanning residues 345 to 360 (AGESLPVALTAPAVNG) is cleaved from the precursor.

Belongs to the reaction center PufL/M/PsbA/D family. As to quaternary structure, PSII is composed of 1 copy each of membrane proteins PsbA, PsbB, PsbC, PsbD, PsbE, PsbF, PsbH, PsbI, PsbJ, PsbK, PsbL, PsbM, PsbT, PsbX, PsbY, PsbZ, Psb30/Ycf12, at least 3 peripheral proteins of the oxygen-evolving complex and a large number of cofactors. It forms dimeric complexes. The D1/D2 heterodimer binds P680, chlorophylls that are the primary electron donor of PSII, and subsequent electron acceptors. It shares a non-heme iron and each subunit binds pheophytin, quinone, additional chlorophylls, carotenoids and lipids. D1 provides most of the ligands for the Mn4-Ca-O5 cluster of the oxygen-evolving complex (OEC). There is also a Cl(-1) ion associated with D1 and D2, which is required for oxygen evolution. The PSII complex binds additional chlorophylls, carotenoids and specific lipids. serves as cofactor. Tyr-161 forms a radical intermediate that is referred to as redox-active TyrZ, YZ or Y-Z. In terms of processing, C-terminally processed by CTPA; processing is essential to allow assembly of the oxygen-evolving complex and thus photosynthetic growth.

The protein resides in the plastid. Its subcellular location is the chloroplast thylakoid membrane. The enzyme catalyses 2 a plastoquinone + 4 hnu + 2 H2O = 2 a plastoquinol + O2. Functionally, photosystem II (PSII) is a light-driven water:plastoquinone oxidoreductase that uses light energy to abstract electrons from H(2)O, generating O(2) and a proton gradient subsequently used for ATP formation. It consists of a core antenna complex that captures photons, and an electron transfer chain that converts photonic excitation into a charge separation. The D1/D2 (PsbA/PsbD) reaction center heterodimer binds P680, the primary electron donor of PSII as well as several subsequent electron acceptors. This chain is Photosystem II protein D1, found in Rhodomonas salina (Cryptomonas salina).